We begin with the raw amino-acid sequence, 386 residues long: Acetate kinase (386 aa).

Asparagine 9 provides a ligand contact to Mg(2+). Lysine 16 lines the ATP pocket. Arginine 74 contacts substrate. The active-site Proton donor/acceptor is the aspartate 131. Residues histidine 191 to glycine 195, aspartate 265 to arginine 267, and glycine 313 to asparagine 317 each bind ATP. Residue glutamate 367 participates in Mg(2+) binding.

The protein belongs to the acetokinase family. Homodimer. The cofactor is Mg(2+). Mn(2+) serves as cofactor.

Its subcellular location is the cytoplasm. It catalyses the reaction acetate + ATP = acetyl phosphate + ADP. Its pathway is metabolic intermediate biosynthesis; acetyl-CoA biosynthesis; acetyl-CoA from acetate: step 1/2. Its function is as follows. Catalyzes the formation of acetyl phosphate from acetate and ATP. Can also catalyze the reverse reaction. The polypeptide is Acetate kinase (Mycolicibacterium gilvum (strain PYR-GCK) (Mycobacterium gilvum (strain PYR-GCK))).